Reading from the N-terminus, the 252-residue chain is Carboxy-S-adenosyl-L-methionine synthase (252 aa).

Residues Tyr45, 70 to 72 (GCS), 95 to 96 (DN), 127 to 128 (DI), Asn142, and Arg209 each bind S-adenosyl-L-methionine.

This sequence belongs to the class I-like SAM-binding methyltransferase superfamily. Cx-SAM synthase family. In terms of assembly, homodimer.

It catalyses the reaction prephenate + S-adenosyl-L-methionine = carboxy-S-adenosyl-L-methionine + 3-phenylpyruvate + H2O. Catalyzes the conversion of S-adenosyl-L-methionine (SAM) to carboxy-S-adenosyl-L-methionine (Cx-SAM). The protein is Carboxy-S-adenosyl-L-methionine synthase of Pseudomonas paraeruginosa (strain DSM 24068 / PA7) (Pseudomonas aeruginosa (strain PA7)).